The primary structure comprises 180 residues: Nucleoside-triphosphatase THEP1 (180 aa).

Residues 8–15 (GPVGSIKA) and 100–107 (VIIIDELG) each bind ATP.

It belongs to the THEP1 NTPase family.

The catalysed reaction is a ribonucleoside 5'-triphosphate + H2O = a ribonucleoside 5'-diphosphate + phosphate + H(+). Functionally, has nucleotide phosphatase activity towards ATP, GTP, CTP, TTP and UTP. May hydrolyze nucleoside diphosphates with lower efficiency. The protein is Nucleoside-triphosphatase THEP1 of Picrophilus torridus (strain ATCC 700027 / DSM 9790 / JCM 10055 / NBRC 100828 / KAW 2/3).